Here is a 335-residue protein sequence, read N- to C-terminus: 2-acylglycerol O-acyltransferase 1 (335 aa).

The next 2 membrane-spanning stretches (helical) occupy residues 24–44 and 104–124; these read WVLS…MLVL and YIFG…NFCT. Residue Asn180 is glycosylated (N-linked (GlcNAc...) asparagine).

This sequence belongs to the diacylglycerol acyltransferase family. In terms of tissue distribution, expressed at high level in kidney and stomach. Expressed at lower level in brown and white adipose tissue, uterus and liver. Not detected in small intestine.

It localises to the endoplasmic reticulum membrane. It catalyses the reaction a 2-acylglycerol + an acyl-CoA = a 1,2-diacylglycerol + CoA. It carries out the reaction 2-(9Z-octadecenoyl)-glycerol + butanoyl-CoA = 1-butanoyl-2-(9Z-octadecenoyl)-glycerol + CoA. The catalysed reaction is 2-(9Z-octadecenoyl)-glycerol + octanoyl-CoA = 1-octanoyl-2-(9Z-octadecenoyl)-glycerol + CoA. The enzyme catalyses 2-(9Z-octadecenoyl)-glycerol + dodecanoyl-CoA = 1-dodecanoyl-2-(9Z-octadecenoyl)-glycerol + CoA. It catalyses the reaction 2-(9Z-octadecenoyl)-glycerol + tetradecanoyl-CoA = 1-tetradecanoyl-2-(9Z-octadecenoyl)-glycerol + CoA. It carries out the reaction 2-(9Z-octadecenoyl)-glycerol + hexadecanoyl-CoA = 1-hexadecanoyl-2-(9Z-octadecenoyl)-glycerol + CoA. The catalysed reaction is 2-(9Z-octadecenoyl)-glycerol + octadecanoyl-CoA = 1-octadecanoyl-2-(9Z-octadecenoyl)-glycerol + CoA. The enzyme catalyses eicosanoyl-CoA + 2-(9Z-octadecenoyl)-glycerol = 1-eicosanoyl-2-(9Z-octadecenoyl)-glycerol + CoA. It catalyses the reaction 2-(9Z-octadecenoyl)-glycerol + (9Z)-octadecenoyl-CoA = 1,2-di-(9Z-octadecenoyl)-glycerol + CoA. It carries out the reaction 2-(9Z-octadecenoyl)-glycerol + (9Z,12Z)-octadecadienoyl-CoA = 1-(9Z,12Z-octadecadienoyl)-2-(9Z-octadecenoyl)-glycerol + CoA. The catalysed reaction is 2-(9Z-octadecenoyl)-glycerol + (5Z,8Z,11Z,14Z)-eicosatetraenoyl-CoA = 1-(5Z,8Z,11Z,14Z-eicosatetraenoyl)-2-(9Z-octadecenoyl)-glycerol + CoA. The enzyme catalyses a 2-acylglycerol + an acyl-CoA = a 1,2-diacyl-sn-glycerol + CoA. It catalyses the reaction a 2-acylglycerol + an acyl-CoA = a 2,3-diacyl-sn-glycerol + CoA. It carries out the reaction a 1-acylglycerol + an acyl-CoA = a 1,2-diacylglycerol + CoA. The catalysed reaction is 1-dodecanoylglycerol + (9Z)-octadecenoyl-CoA = 1-dodecanoyl-2-(9Z-octadecenoyl)-glycerol + CoA. The enzyme catalyses 1-tetradecanoylglycerol + (9Z)-octadecenoyl-CoA = 1-tetradecanoyl-2-(9Z-octadecenoyl)-glycerol + CoA. It catalyses the reaction 1-hexadecanoylglycerol + (9Z)-octadecenoyl-CoA = 1-hexadecanoyl-2-(9Z-octadecenoyl)-glycerol + CoA. It carries out the reaction 1-(9Z-octadecenoyl)-glycerol + (9Z)-octadecenoyl-CoA = 1,2-di-(9Z-octadecenoyl)-glycerol + CoA. The catalysed reaction is 1-(9Z,12Z-octadecadienoyl)-glycerol + (9Z)-octadecenoyl-CoA = 1-(9Z,12Z-octadecadienoyl)-2-(9Z-octadecenoyl)-glycerol + CoA. The enzyme catalyses 1-(9Z,12Z,15Z-octadecatrienoyl)-glycerol + (9Z)-octadecenoyl-CoA = 1-(9Z,12Z,15Z-octadecatrienoyl)-2-(9Z-octadecenoyl)-glycerol + CoA. It catalyses the reaction 1-(5Z,8Z,11Z,14Z-eicosatetraenoyl)-glycerol + (9Z)-octadecenoyl-CoA = 1-(5Z,8Z,11Z,14Z-eicosatetraenoyl)-2-(9Z-octadecenoyl)-glycerol + CoA. It carries out the reaction a 1-acylglycerol + an acyl-CoA = a 1,3-diacylglycerol + CoA. The catalysed reaction is 1-dodecanoylglycerol + (9Z)-octadecenoyl-CoA = 1-dodecanoyl-3-(9Z-octadecenoyl)-glycerol + CoA. The enzyme catalyses 1-hexadecanoylglycerol + (9Z)-octadecenoyl-CoA = 1-(9Z-octadecenoyl)-3-hexadecanoylglycerol + CoA. It catalyses the reaction 1-octadecanoylglycerol + (9Z)-octadecenoyl-CoA = 1-octadecanoyl-3-(9Z-octadecenoyl)-glycerol + CoA. It carries out the reaction 1-(9Z-octadecenoyl)-sn-glycerol + (9Z)-octadecenoyl-CoA = 1,3-di-(9Z-octadecenoyl)-glycerol + CoA. The catalysed reaction is 1-(9Z,12Z-octadecadienoyl)-glycerol + (9Z)-octadecenoyl-CoA = 1-(9Z-octadecenoyl)-3-(9Z,12Z-octadecadienoyl)-glycerol + CoA. The enzyme catalyses 1-(9Z,12Z,15Z-octadecatrienoyl)-glycerol + (9Z)-octadecenoyl-CoA = 1-(9Z,12Z,15Z-octadecatrienoyl)-3-(9Z-octadecenoyl)-glycerol + CoA. It catalyses the reaction a 1-acyl-sn-glycerol + an acyl-CoA = a 1,3-diacyl-sn-glycerol + CoA. It carries out the reaction a 3-acyl-sn-glycerol + an acyl-CoA = a 1,3-diacyl-sn-glycerol + CoA. The catalysed reaction is 3-octadecanoyl-sn-glycerol + (9Z)-octadecenoyl-CoA = 1-(9Z-octadecenoyl)-3-octadecanoyl-sn-glycerol + CoA. The protein operates within glycerolipid metabolism; triacylglycerol biosynthesis. Functionally, involved in glycerolipid synthesis and lipid metabolism. Catalyzes the formation of diacylglycerol, the precursor of triacylglycerol, by transferring the acyl chain of a fatty acyl-CoA to a monoacylglycerol, mainly at the sn-1 or sn-3 positions. It uses both sn-2-monoacylglycerol (2-acylglycerol) and sn-1-monoacylglycerol (1-acyl-sn-glycerol) equally well as substrates, and uses sn-3-monoacylglycerol (3-acyl-sn-glycerol) with lower efficiency. Probably not involved in absorption of dietary fat in the small intestine. The polypeptide is 2-acylglycerol O-acyltransferase 1 (Mus musculus (Mouse)).